Reading from the N-terminus, the 226-residue chain is ATP synthase subunit a (226 aa).

6 consecutive transmembrane segments (helical) span residues 22–42 (SMNW…FWLI), 73–93 (IIIF…SLIP), 102–122 (LLLN…YLIY), 135–155 (LNSP…SLII), 173–193 (LILT…PINL), and 202–222 (LEIF…ILYF).

It belongs to the ATPase A chain family. F-type ATPases have 2 components, CF(1) - the catalytic core - and CF(0) - the membrane proton channel. CF(1) has five subunits: alpha(3), beta(3), gamma(1), delta(1), epsilon(1). CF(0) has three main subunits: a, b and c.

The protein resides in the mitochondrion inner membrane. Mitochondrial membrane ATP synthase (F(1)F(0) ATP synthase or Complex V) produces ATP from ADP in the presence of a proton gradient across the membrane which is generated by electron transport complexes of the respiratory chain. F-type ATPases consist of two structural domains, F(1) - containing the extramembraneous catalytic core and F(0) - containing the membrane proton channel, linked together by a central stalk and a peripheral stalk. During catalysis, ATP synthesis in the catalytic domain of F(1) is coupled via a rotary mechanism of the central stalk subunits to proton translocation. Key component of the proton channel; it may play a direct role in the translocation of protons across the membrane. This is ATP synthase subunit a (ATP6) from Apis mellifera ligustica (Common honeybee).